The following is a 215-amino-acid chain: MLDIGWTELVVIAIVLIIVVGPKDLPPMLRAFGRMTSKMRGMASDFRRQFDEALREADLDDVRKTISDAQSLNPTAALRDAMNPLRQLGNEIKSDLQKATTPDRPPASATPEPLVEPVNTDAVGETAAKATEKVAAAAVSSASRQMDRAADVPKASEPKPAPKPRAQSKKPGTSVTKKAAGETAPKKSPARKAPGEAPAANKSKTRAASRKKGDA.

Residues 1–21 (MLDIGWTELVVIAIVLIIVVG) traverse the membrane as a helical segment. Disordered regions lie at residues 95–119 (DLQKATTPDRPPASATPEPLVEPVN) and 138–215 (AVSS…KGDA). Positions 145 to 157 (QMDRAADVPKASE) are enriched in basic and acidic residues. The segment covering 203 to 215 (SKTRAASRKKGDA) has biased composition (basic residues).

This sequence belongs to the TatB family. The Tat system comprises two distinct complexes: a TatABC complex, containing multiple copies of TatA, TatB and TatC subunits, and a separate TatA complex, containing only TatA subunits. Substrates initially bind to the TatABC complex, which probably triggers association of the separate TatA complex to form the active translocon.

It localises to the cell inner membrane. In terms of biological role, part of the twin-arginine translocation (Tat) system that transports large folded proteins containing a characteristic twin-arginine motif in their signal peptide across membranes. Together with TatC, TatB is part of a receptor directly interacting with Tat signal peptides. TatB may form an oligomeric binding site that transiently accommodates folded Tat precursor proteins before their translocation. The protein is Sec-independent protein translocase protein TatB of Rhizobium meliloti (strain 1021) (Ensifer meliloti).